The primary structure comprises 462 residues: L-seryl-tRNA(Sec) selenium transferase (462 aa).

The residue at position 292 (K292) is an N6-(pyridoxal phosphate)lysine.

Belongs to the SelA family. Pyridoxal 5'-phosphate serves as cofactor.

The protein localises to the cytoplasm. The enzyme catalyses L-seryl-tRNA(Sec) + selenophosphate + H(+) = L-selenocysteinyl-tRNA(Sec) + phosphate. It functions in the pathway aminoacyl-tRNA biosynthesis; selenocysteinyl-tRNA(Sec) biosynthesis; selenocysteinyl-tRNA(Sec) from L-seryl-tRNA(Sec) (bacterial route): step 1/1. Converts seryl-tRNA(Sec) to selenocysteinyl-tRNA(Sec) required for selenoprotein biosynthesis. The protein is L-seryl-tRNA(Sec) selenium transferase of Geotalea uraniireducens (strain Rf4) (Geobacter uraniireducens).